The following is a 472-amino-acid chain: tRNA-2-methylthio-N(6)-dimethylallyladenosine synthase (472 aa).

An MTTase N-terminal domain is found at 22 to 142 (RKVFVKTYGC…LPDALKRARA (121 aa)). Residues C31, C67, C105, C183, C187, and C190 each coordinate [4Fe-4S] cluster. The region spanning 169–403 (RARGVTAFLT…LLVKQQRGFA (235 aa)) is the Radical SAM core domain. One can recognise a TRAM domain in the interval 404–466 (EACVGREIDL…PNSLFAEMIG (63 aa)).

Belongs to the methylthiotransferase family. MiaB subfamily. Monomer. The cofactor is [4Fe-4S] cluster.

It is found in the cytoplasm. The enzyme catalyses N(6)-dimethylallyladenosine(37) in tRNA + (sulfur carrier)-SH + AH2 + 2 S-adenosyl-L-methionine = 2-methylsulfanyl-N(6)-dimethylallyladenosine(37) in tRNA + (sulfur carrier)-H + 5'-deoxyadenosine + L-methionine + A + S-adenosyl-L-homocysteine + 2 H(+). Its function is as follows. Catalyzes the methylthiolation of N6-(dimethylallyl)adenosine (i(6)A), leading to the formation of 2-methylthio-N6-(dimethylallyl)adenosine (ms(2)i(6)A) at position 37 in tRNAs that read codons beginning with uridine. This chain is tRNA-2-methylthio-N(6)-dimethylallyladenosine synthase, found in Rhizobium meliloti (strain 1021) (Ensifer meliloti).